Consider the following 174-residue polypeptide: Dual-action ribosomal maturation protein DarP (174 aa).

It belongs to the DarP family.

Its subcellular location is the cytoplasm. In terms of biological role, member of a network of 50S ribosomal subunit biogenesis factors which assembles along the 30S-50S interface, preventing incorrect 23S rRNA structures from forming. Promotes peptidyl transferase center (PTC) maturation. This is Dual-action ribosomal maturation protein DarP from Pseudomonas paraeruginosa (strain DSM 24068 / PA7) (Pseudomonas aeruginosa (strain PA7)).